A 390-amino-acid polypeptide reads, in one-letter code: S-adenosylmethionine synthase 3 (390 aa).

Mg(2+) is bound at residue E9. H15 contacts ATP. E43 is a K(+) binding site. Residues E56 and Q99 each coordinate L-methionine. Residues 167–169 (DGK), 235–238 (SGRF), D246, 252–253 (RK), A269, K273, and K277 contribute to the ATP site. D246 contributes to the L-methionine binding site. K277 serves as a coordination point for L-methionine.

It belongs to the AdoMet synthase family. Homotetramer. Requires Mn(2+) as cofactor. It depends on Mg(2+) as a cofactor. Co(2+) is required as a cofactor. The cofactor is K(+). NH4(+) serves as cofactor. In terms of tissue distribution, mostly expressed in roots, and, to a lower extent, in hypocotyls and cotyledons.

The protein localises to the cytoplasm. It catalyses the reaction L-methionine + ATP + H2O = S-adenosyl-L-methionine + phosphate + diphosphate. It functions in the pathway amino-acid biosynthesis; S-adenosyl-L-methionine biosynthesis; S-adenosyl-L-methionine from L-methionine: step 1/1. Inhibited by products of SAMS reaction (SAM, Pi, PPi), substrate analogs (cycloleucine and ethionine), and alternative nucleotides (GTP, CTP and ADP). Strongly repressed by PPPi. Functionally, catalyzes the formation of S-adenosylmethionine from methionine and ATP. The reaction comprises two steps that are both catalyzed by the same enzyme: formation of S-adenosylmethionine (AdoMet) and triphosphate, and subsequent hydrolysis of the triphosphate. The protein is S-adenosylmethionine synthase 3 (SAMS3) of Catharanthus roseus (Madagascar periwinkle).